We begin with the raw amino-acid sequence, 640 residues long: Chaperone protein DnaK (640 aa).

Residue Thr-196 is modified to Phosphothreonine; by autocatalysis. 2 disordered regions span residues 487–526 (GKEQ…KEEI) and 593–640 (SHLY…GNDK). Basic and acidic residues predominate over residues 501 to 526 (TDAEISKMKEDAKEHAAEDQKRKEEI). Polar residues predominate over residues 595–613 (LYQSQGPESSQPETAAQSD). A compositionally biased stretch (acidic residues) spans 630–640 (AEYEVIDGNDK).

Belongs to the heat shock protein 70 family.

Functionally, acts as a chaperone. The protein is Chaperone protein DnaK of Pelodictyon phaeoclathratiforme (strain DSM 5477 / BU-1).